The chain runs to 550 residues: Membrane protein insertase YidC (550 aa).

6 helical membrane passes run 6 to 26 (LVLFLVFSLSLVMLWNAWLKQ), 333 to 353 (VVDYGWLTVIAAPLFWVLSWI), 356 to 376 (VVGNWGWAIIIVTILIKLMFF), 430 to 450 (LPILVQIPVFISLYWVLLGSV), 469 to 489 (PYFILPVIMGVSMLIQMKLNP), and 504 to 524 (PVIFTFMFLWFPSGLVLYWVV).

It belongs to the OXA1/ALB3/YidC family. Type 1 subfamily. As to quaternary structure, interacts with the Sec translocase complex via SecD. Specifically interacts with transmembrane segments of nascent integral membrane proteins during membrane integration.

The protein localises to the cell inner membrane. Functionally, required for the insertion and/or proper folding and/or complex formation of integral membrane proteins into the membrane. Involved in integration of membrane proteins that insert both dependently and independently of the Sec translocase complex, as well as at least some lipoproteins. Aids folding of multispanning membrane proteins. This is Membrane protein insertase YidC from Aromatoleum aromaticum (strain DSM 19018 / LMG 30748 / EbN1) (Azoarcus sp. (strain EbN1)).